The primary structure comprises 736 residues: 1,4-alpha-glucan branching enzyme GlgB (736 aa).

Catalysis depends on D415, which acts as the Nucleophile. Residue E470 is the Proton donor of the active site.

It belongs to the glycosyl hydrolase 13 family. GlgB subfamily. Monomer.

It catalyses the reaction Transfers a segment of a (1-&gt;4)-alpha-D-glucan chain to a primary hydroxy group in a similar glucan chain.. It participates in glycan biosynthesis; glycogen biosynthesis. In terms of biological role, catalyzes the formation of the alpha-1,6-glucosidic linkages in glycogen by scission of a 1,4-alpha-linked oligosaccharide from growing alpha-1,4-glucan chains and the subsequent attachment of the oligosaccharide to the alpha-1,6 position. This chain is 1,4-alpha-glucan branching enzyme GlgB, found in Burkholderia orbicola (strain AU 1054).